The following is a 295-amino-acid chain: 3-hydroxy-5-phosphonooxypentane-2,4-dione thiolase (295 aa).

Catalysis depends on Lys203, which acts as the Schiff-base intermediate with substrate.

The protein belongs to the DeoC/FbaB aldolase family. Homodecamer.

The protein localises to the cytoplasm. It catalyses the reaction dihydroxyacetone phosphate + acetyl-CoA = 3-hydroxy-2,4-dioxopentyl phosphate + CoA. Functionally, involved in the degradation of phospho-AI-2, thereby terminating induction of the lsr operon and closing the AI-2 signaling cycle. Catalyzes the transfer of an acetyl moiety from 3-hydroxy-5-phosphonooxypentane-2,4-dione to CoA to form glycerone phosphate and acetyl-CoA. In Enterobacter sp. (strain 638), this protein is 3-hydroxy-5-phosphonooxypentane-2,4-dione thiolase.